The primary structure comprises 176 residues: Endoribonuclease YbeY (176 aa).

His-128, His-132, and His-138 together coordinate Zn(2+).

Belongs to the endoribonuclease YbeY family. Zn(2+) is required as a cofactor.

It is found in the cytoplasm. Its function is as follows. Single strand-specific metallo-endoribonuclease involved in late-stage 70S ribosome quality control and in maturation of the 3' terminus of the 16S rRNA. The protein is Endoribonuclease YbeY of Zymomonas mobilis subsp. mobilis (strain ATCC 31821 / ZM4 / CP4).